The sequence spans 64 residues: Large ribosomal subunit protein bL28C (64 aa).

The protein belongs to the bacterial ribosomal protein bL28 family.

This Mycobacterium tuberculosis (strain ATCC 25618 / H37Rv) protein is Large ribosomal subunit protein bL28C.